We begin with the raw amino-acid sequence, 926 residues long: DNA mismatch repair protein MutS (926 aa).

Residues 16-40 are disordered; it reads VASTPTRRGRPPGSSAARASNGAGS. Positions 26–40 are enriched in low complexity; sequence PPGSSAARASNGAGS. 658–665 is an ATP binding site; that stretch reads GPNMAGKS.

Belongs to the DNA mismatch repair MutS family.

This protein is involved in the repair of mismatches in DNA. It is possible that it carries out the mismatch recognition step. This protein has a weak ATPase activity. This chain is DNA mismatch repair protein MutS, found in Granulibacter bethesdensis (strain ATCC BAA-1260 / CGDNIH1).